The sequence spans 225 residues: Large ribosomal subunit protein bL25 (225 aa).

A disordered region spans residues 206-225; the sequence is EDSKNKITKDNETNKDKSNL.

This sequence belongs to the bacterial ribosomal protein bL25 family. CTC subfamily. As to quaternary structure, part of the 50S ribosomal subunit; part of the 5S rRNA/L5/L18/L25 subcomplex. Contacts the 5S rRNA. Binds to the 5S rRNA independently of L5 and L18.

This is one of the proteins that binds to the 5S RNA in the ribosome where it forms part of the central protuberance. This Vesicomyosocius okutanii subsp. Calyptogena okutanii (strain HA) protein is Large ribosomal subunit protein bL25.